We begin with the raw amino-acid sequence, 84 residues long: Coiled-coil-helix-coiled-coil-helix domain-containing protein 7 (84 aa).

The CHCH domain occupies 12–54 (SNPCLEETDASTKCMDENQYQKDLCTSYFIKYKNCRKFWNGIM). 2 consecutive short sequence motifs (cx9C motif) follow at residues 15-25 (CLEETDASTKC) and 36-46 (CTSYFIKYKNC). 2 disulfides stabilise this stretch: Cys-15–Cys-46 and Cys-25–Cys-36.

This sequence belongs to the CHCHD7 family.

Its subcellular location is the mitochondrion intermembrane space. The sequence is that of Coiled-coil-helix-coiled-coil-helix domain-containing protein 7 (chchd7) from Xenopus laevis (African clawed frog).